The chain runs to 504 residues: U3 snoRNP-associated protein-like YAO (504 aa).

A disordered region spans residues M1 to E120. The segment covering G20–K33 has biased composition (basic and acidic residues). Acidic residues-rich tracts occupy residues D41 to E54 and E70 to T81. Residues L89–E106 are compositionally biased toward basic and acidic residues. Positions E107–E120 are enriched in acidic residues. WD repeat units follow at residues K159–Y198, N220–A259, G262–E301, G304–Y342, A344–V382, S413–L452, and P456–V496.

This sequence belongs to the WD repeat RRP9 family. In terms of tissue distribution, expressed in tissues with active in cell division such as shoot apexes, root tips, lateral root primordia, embryos, endosperm, pollen grains and embryo sacs.

It localises to the nucleus. The protein localises to the nucleolus. In terms of biological role, component of a nucleolar small nuclear ribonucleoprotein particle (snoRNP) thought to participate in the processing and modification of pre-ribosomal RNA. Essential for embryogenesis. Plays a critical role in embryo sac development and gametic cell fate. Required for the correct positioning of the first division plane of zygote. May function during early embryogenesis. This is U3 snoRNP-associated protein-like YAO from Arabidopsis thaliana (Mouse-ear cress).